A 32-amino-acid chain; its full sequence is Toxic phospholipase A2 (32 aa).

Belongs to the phospholipase A2 family. Group III subfamily. Requires Ca(2+) as cofactor.

It localises to the secreted. It is found in the nematocyst. The enzyme catalyses a 1,2-diacyl-sn-glycero-3-phosphocholine + H2O = a 1-acyl-sn-glycero-3-phosphocholine + a fatty acid + H(+). In terms of biological role, PLA2 catalyzes the calcium-dependent hydrolysis of the 2-acyl groups in 3-sn-phosphoglycerides. This is Toxic phospholipase A2 from Rhopilema nomadica (Mediteranean medusa).